The following is a 527-amino-acid chain: MTQQAAEVAKRRTFAIISHPDAGKTTITEKLLLMGKAISIAGTVKSRKSDRHATSDWMEMEKQRGISITTSVMQFPYREHMINLLDTPGHEDFSEDTYRTLTAVDSALMVLDGGKGVEPRTIALMDVCRLRDTPIVSFINKLDRDIRDPIELLDEIEAVLKIKAAPITWPIGCYRDFKGVYHLADDYIIVYTAGHGHERTETKIIEKLDSDEARAHLGDEYERFVEQLELVQGACHEFNQQEFIDGQLTPVFFGTALGNFGVDHVLDAVVNWAPKPLARVANERTVEPAEEKFSGFVFKIQANMDPKHRDRIAFMRICSGRYDKGMKMRHVRLGKDVRIGDALTFFSSEREQLEEAYAGDIIGLHNHGTIQIGDTFTEGEALGFTGIPHFAPELFRRVRLKDPLKSKQLRQGLQQLAEEGATQVFFPQRSNDIILGAVGVLQFDVVASRLKEEYKVECAYEPITVWSARWIDCADKKKLEEFENKAVENLAVDGGGHLTYLAPTRVNLALMEERWPDVKFRATREHH.

The 269-residue stretch at 9-277 (AKRRTFAIIS…AVVNWAPKPL (269 aa)) folds into the tr-type G domain. GTP-binding positions include 18–25 (SHPDAGKT), 86–90 (DTPGH), and 140–143 (NKLD).

The protein belongs to the TRAFAC class translation factor GTPase superfamily. Classic translation factor GTPase family. PrfC subfamily.

The protein localises to the cytoplasm. In terms of biological role, increases the formation of ribosomal termination complexes and stimulates activities of RF-1 and RF-2. It binds guanine nucleotides and has strong preference for UGA stop codons. It may interact directly with the ribosome. The stimulation of RF-1 and RF-2 is significantly reduced by GTP and GDP, but not by GMP. In Pseudomonas savastanoi pv. phaseolicola (strain 1448A / Race 6) (Pseudomonas syringae pv. phaseolicola (strain 1448A / Race 6)), this protein is Peptide chain release factor 3.